Here is an 87-residue protein sequence, read N- to C-terminus: UPF0250 protein YE3006 (87 aa).

The protein belongs to the UPF0250 family.

This chain is UPF0250 protein YE3006, found in Yersinia enterocolitica serotype O:8 / biotype 1B (strain NCTC 13174 / 8081).